A 548-amino-acid polypeptide reads, in one-letter code: Acetamidase (548 aa).

Catalysis depends on charge relay system residues Lys-129 and Ser-204. Catalysis depends on Ser-228, which acts as the Acyl-ester intermediate.

The protein belongs to the amidase family.

It catalyses the reaction a monocarboxylic acid amide + H2O = a monocarboxylate + NH4(+). The catalysed reaction is acetamide + H2O = acetate + NH4(+). Allows acetamide to be used as a sole carbon or nitrogen source. This chain is Acetamidase (amdS), found in Emericella nidulans (strain FGSC A4 / ATCC 38163 / CBS 112.46 / NRRL 194 / M139) (Aspergillus nidulans).